Consider the following 192-residue polypeptide: Peptidyl-tRNA hydrolase (192 aa).

Position 17 (Tyr-17) interacts with tRNA. The Proton acceptor role is filled by His-22. TRNA is bound by residues Tyr-68, Asn-70, and Asn-116.

The protein belongs to the PTH family. As to quaternary structure, monomer.

The protein localises to the cytoplasm. It catalyses the reaction an N-acyl-L-alpha-aminoacyl-tRNA + H2O = an N-acyl-L-amino acid + a tRNA + H(+). Functionally, hydrolyzes ribosome-free peptidyl-tRNAs (with 1 or more amino acids incorporated), which drop off the ribosome during protein synthesis, or as a result of ribosome stalling. Catalyzes the release of premature peptidyl moieties from peptidyl-tRNA molecules trapped in stalled 50S ribosomal subunits, and thus maintains levels of free tRNAs and 50S ribosomes. The chain is Peptidyl-tRNA hydrolase from Mycolicibacterium vanbaalenii (strain DSM 7251 / JCM 13017 / BCRC 16820 / KCTC 9966 / NRRL B-24157 / PYR-1) (Mycobacterium vanbaalenii).